We begin with the raw amino-acid sequence, 338 residues long: MLSALARPAGAALRRSFSTSAQNNAKVAVLGASGGIGQPLSLLLKNSPLVSRLTLYDIAHTPGVAADLSHIETRATVKGYLGPEQLPDCLKGCDVVVIPAGVPRKPGMTRDDLFNTNATIVATLTAACAQHCPEAMICIISNPVNSTIPITAEVFKKHGVYNPNKIFGVTTLDIVRANAFVAELKDLDPARVNVPVIGGHAGKTIIPLISQCTPKVEFPQDQLTTLTGRIQEAGTEVVKAKAGAGSATLSMAYAGARFVFSLVDAMNGKEGVVECSFVKSQETDCPYFSTPLLLGKKGIEKNLGIGKVSPFEEKMIAEAIPELKASIKKGEEFVKNMK.

A mitochondrion-targeting transit peptide spans 1–24 (MLSALARPAGAALRRSFSTSAQNN). NAD(+) is bound by residues 31 to 37 (GASGGIG) and D57. An O-linked (GlcNAc) serine glycan is attached at S33. Residues K78 and K91 each carry the N6-acetyllysine; alternate modification. N6-succinyllysine; alternate occurs at positions 78 and 91. Residues R104 and R110 each coordinate substrate. Residues N117 and 140 to 142 (ISN) each bind NAD(+). N142 contacts substrate. K165 is subject to N6-acetyllysine. Position 176 (R176) interacts with substrate. An N6-acetyllysine; alternate modification is found at K185. At K185 the chain carries N6-succinyllysine; alternate. H200 (proton acceptor) is an active-site residue. K203 bears the N6-succinyllysine mark. N6-acetyllysine; alternate is present on residues K215 and K239. N6-succinyllysine; alternate occurs at positions 215 and 239. K239 is subject to N6-malonyllysine; alternate. S246 bears the Phosphoserine mark. M251 lines the NAD(+) pocket. K269 carries the N6-succinyllysine modification. 5 positions are modified to N6-acetyllysine; alternate: K296, K301, K307, K314, and K324. N6-succinyllysine; alternate is present on residues K296, K301, K307, K314, and K324. K307 carries the post-translational modification N6-malonyllysine; alternate. Position 326 is a phosphoserine (S326). An N6-acetyllysine; alternate mark is found at K328, K329, and K335. K328 is subject to N6-succinyllysine; alternate. K329 is subject to N6-malonyllysine; alternate. Residue K335 is modified to N6-succinyllysine; alternate.

Belongs to the LDH/MDH superfamily. MDH type 1 family. Homodimer. Post-translationally, acetylation is enhanced after treatment either with trichostin A (TCA) or with nicotinamide (NAM) with the appearance of tri- and tetraacetylations. Glucose also increases acetylation.

It localises to the mitochondrion matrix. The catalysed reaction is (S)-malate + NAD(+) = oxaloacetate + NADH + H(+). Its activity is regulated as follows. Enzyme activity is enhanced by acetylation. The protein is Malate dehydrogenase, mitochondrial (MDH2) of Bos taurus (Bovine).